The sequence spans 276 residues: MSKGPAPFLNIGKRAKDLLYKDYNFDQKFSLTTTSNSGLGLTATGVKIDELFIGDIQTQHKSGKTTVDVKIDSESRVSTTVTVDEALTGLKTSFSFRVPDQKSGKLDLQYLHDHFALNSTIGLTSTPLIELAATIGTNELSAGAEVGFDSTSASVTKYNSGICYNKHDFSAAVLLADKGETLKASYIHTFNETNGATVAAEVTHKLKTKENYFTIGSSHAIDSSTLLKTRFSNGGKVGVLCQHEWRPKSTVSISAEYDPKVVSSPSRFGVAIALKP.

Belongs to the eukaryotic mitochondrial porin (TC 1.B.8.1) family.

It is found in the mitochondrion outer membrane. Forms a channel through the mitochondrial outer membrane that allows diffusion of small hydrophilic molecules. The channel adopts an open conformation at low or zero membrane potential and a closed conformation at potentials above 30-40 mV. The open state has a weak anion selectivity whereas the closed state is cation-selective. In Oryza sativa subsp. japonica (Rice), this protein is Mitochondrial outer membrane protein porin 6 (VDAC6).